The following is a 530-amino-acid chain: Chaperonin GroEL (530 aa).

Residues 30–33, lysine 51, 87–91, glycine 415, and aspartate 495 each bind ATP; these read TLGP and DGTTT.

Belongs to the chaperonin (HSP60) family. As to quaternary structure, forms a cylinder of 14 subunits composed of two heptameric rings stacked back-to-back. Interacts with the co-chaperonin GroES.

Its subcellular location is the cytoplasm. The catalysed reaction is ATP + H2O + a folded polypeptide = ADP + phosphate + an unfolded polypeptide.. Together with its co-chaperonin GroES, plays an essential role in assisting protein folding. The GroEL-GroES system forms a nano-cage that allows encapsulation of the non-native substrate proteins and provides a physical environment optimized to promote and accelerate protein folding. This chain is Chaperonin GroEL, found in Carsonella ruddii (strain PV).